Consider the following 446-residue polypeptide: Golgi reassembly-stacking protein 1 (446 aa).

Residues M1–G20 are disordered. A lipid anchor (N-myristoyl glycine) is attached at G2. 2 consecutive PDZ GRASP-type domains span residues E14–F104 and H110–L198. Residues E14–G214 form a GRASP region. Zn(2+) is bound by residues H17, H19, and C102. The interval L189 to I201 is essential for interaction with GOLGA2/GM130. Disordered regions lie at residues P202–R252 and V343–L446. Residues T216, T220, and T224 each carry the phosphothreonine modification. Residues V343–S354 show a composition bias toward low complexity. Residues S365, S367, and S376 each carry the phosphoserine modification.

The protein belongs to the GORASP family. In terms of assembly, homodimer. Forms higher-order oligomers under interphase but not mitotic conditions. Dimers of the protein on one membrane might be able to interact with dimers on another and so stack cisternae. Interacts with the C-terminus of GOLGA2/GM130 under both mitotic and non-mitotic conditions. The interaction is critical for the correct targeting of both proteins to the cis-Golgi. Interacts with TMED2 and TMED3. In terms of processing, phosphorylated by CDC2/B1 and PLK kinases during mitosis. Phosphorylation cycle correlates with the cisternal stacking cycle. Phosphorylation of the homodimer prevents the association of dimers into higher-order oligomers, leading to cisternal unstacking. Target for caspase-3 cleavage during apoptosis. The cleavage contributes to Golgi fragmentation and occurs very early in the execution phase of apoptosis. Post-translationally, myristoylated.

The protein localises to the golgi apparatus. It localises to the cis-Golgi network membrane. In terms of biological role, key structural protein of the Golgi apparatus. The membrane cisternae of the Golgi apparatus adhere to each other to form stacks, which are aligned side by side to form the Golgi ribbon. Acting in concert with GORASP2/GRASP55, is required for the formation and maintenance of the Golgi ribbon, and may be dispensable for the formation of stacks. However, other studies suggest that GORASP1 plays an important role in assembly and membrane stacking of the cisternae, and in the reassembly of Golgi stacks after breakdown during mitosis. Caspase-mediated cleavage of GORASP1 is required for fragmentation of the Golgi during apoptosis. Also mediates, via its interaction with GOLGA2/GM130, the docking of transport vesicles with the Golgi membranes. Mediates ER stress-induced unconventional (ER/Golgi-independent) trafficking of core-glycosylated CFTR to cell membrane. This chain is Golgi reassembly-stacking protein 1 (Gorasp1), found in Mus musculus (Mouse).